The sequence spans 74 residues: U-scoloptoxin(09)-Sm3a (74 aa).

An N-terminal signal peptide occupies residues 1–22 (MNANSIFLCFFIMLIGCTLTHS).

The protein belongs to the scoloptoxin-09 family. In terms of processing, contains 3 disulfide bonds. In terms of tissue distribution, expressed by the venom gland.

It is found in the secreted. In Scolopendra morsitans (Tanzanian blue ringleg centipede), this protein is U-scoloptoxin(09)-Sm3a.